The sequence spans 195 residues: Imidazoleglycerol-phosphate dehydratase (195 aa).

It belongs to the imidazoleglycerol-phosphate dehydratase family.

The protein localises to the cytoplasm. It catalyses the reaction D-erythro-1-(imidazol-4-yl)glycerol 3-phosphate = 3-(imidazol-4-yl)-2-oxopropyl phosphate + H2O. It participates in amino-acid biosynthesis; L-histidine biosynthesis; L-histidine from 5-phospho-alpha-D-ribose 1-diphosphate: step 6/9. The protein is Imidazoleglycerol-phosphate dehydratase of Parafrankia sp. (strain EAN1pec).